Here is a 523-residue protein sequence, read N- to C-terminus: MSSTTPSDKDRVVIFDTTLRDGEQCPGATMTFEEKLNIAAMLDGMGVDVIEAGFPIASDGDFEAVNEIAKRTQNAVVCGLSRAGAKDIDRCAEAIRPAKRGRIHTFLSTSPVHMKYKLQMEPQAVFELVVSSVTRARNHTDDVEWSSEDGTRTEFDFLCRCVEAAIKAGATTINIPDTVGYAVPEEYYDLFKRVRETVPNSDKAVFSVHCHNDLGMAVANSMAGIRAGARQIECTINGIGERAGNAALEEVVMAMRVRNDKLPFWNKIDTTQLTHASKVVSAATSFPVQYNKAIVGRNAFAHESGIHQDGMLKNAQTYEIMLPETVGVKQTSLVMGKHSGRHAFIHKLEEMGHKLAGNQVEDAFVRFKALADRKKHIYDEDIEALIDEGMVSAHDRIKLLSLSVIAGTRGPQRATMKLDVDGVTKIEESEGNGPVDAVFNCIKSLVPHEAKLELYQVHAVTEGTDAQAEVSVRLSQDGRSMTARAADPDTLVASAKAYLGALNKLVMKRQRDVAQGAAAAAAS.

The Pyruvate carboxyltransferase domain occupies 12–274 (VVIFDTTLRD…WNKIDTTQLT (263 aa)). Mn(2+) contacts are provided by Asp-21, His-209, His-211, and Asn-245. Residues 398-523 (KLLSLSVIAG…AQGAAAAAAS (126 aa)) are regulatory domain.

It belongs to the alpha-IPM synthase/homocitrate synthase family. LeuA type 1 subfamily. In terms of assembly, homodimer. Mn(2+) is required as a cofactor.

Its subcellular location is the cytoplasm. The enzyme catalyses 3-methyl-2-oxobutanoate + acetyl-CoA + H2O = (2S)-2-isopropylmalate + CoA + H(+). The protein operates within amino-acid biosynthesis; L-leucine biosynthesis; L-leucine from 3-methyl-2-oxobutanoate: step 1/4. In terms of biological role, catalyzes the condensation of the acetyl group of acetyl-CoA with 3-methyl-2-oxobutanoate (2-ketoisovalerate) to form 3-carboxy-3-hydroxy-4-methylpentanoate (2-isopropylmalate). In Bradyrhizobium sp. (strain BTAi1 / ATCC BAA-1182), this protein is 2-isopropylmalate synthase.